The primary structure comprises 279 residues: Tumor protein p63-regulated gene 1 protein (279 aa).

The segment at Met-1–Gln-49 is disordered. Residues Val-72 to Met-259 enclose the hSac2 domain.

The protein belongs to the TPRG1 family. As to expression, highly expressed in skin. Also detected at low levels in tongue and esophagus.

The protein resides in the cytoplasm. This is Tumor protein p63-regulated gene 1 protein from Mus musculus (Mouse).